Consider the following 242-residue polypeptide: Probable transcriptional regulatory protein PXO_01555 (242 aa).

It belongs to the TACO1 family.

It localises to the cytoplasm. This is Probable transcriptional regulatory protein PXO_01555 from Xanthomonas oryzae pv. oryzae (strain PXO99A).